The chain runs to 855 residues: Envelope glycoprotein gp160 (855 aa).

Residues 1–31 form the signal peptide; it reads MTARGTRKNYQRLWRWGTMLLGMLMICSAAE. Topologically, residues 32-683 are extracellular; that stretch reads NLWVTVYYGV…ITNWLWYIRI (652 aa). A disulfide bond links C53 and C73. Residues N87, N134, N142, N145, N161, N165, N192, N202, N239, N246, N267, N281, N294, N300, N306, N336, and N359 are each glycosylated (N-linked (GlcNAc...) asparagine; by host). Intrachain disulfides connect C118–C210, C125–C201, C130–C162, C223–C252, and C233–C244. A V1 region spans residues 130–161; the sequence is CTDVNTTSSSLRNATNTTSSSWETMEKGELKN. A V2 region spans residues 162–201; the sequence is CSFNTTTSIRDKMQEQYALFYKLDVLPIDKNDTKFRLIHC. Residues 301–334 form a V3 region; the sequence is CTRPNNNTRNRISIGPGRAFHTTKQIIGDIRQAH. A disulfide bridge connects residues C301 and C335. Residues 367 to 377 are CD4-binding loop; sequence SSGGDPEIVMH. 2 disulfides stabilise this stretch: C381/C442 and C388/C415. Positions 388–415 are V4; sequence CNTSQLFNSTWNDTTRANSTEVTITLPC. N389, N395, N399, N405, and N458 each carry an N-linked (GlcNAc...) asparagine; by host glycan. 2 V5 regions span residues 458 to 469 and 460 to 469; these read NTTNGIEIFRPA and TNGIEIFRPA. Residues 510–531 form a fusion peptide region; the sequence is AVGMLGAMFLGFLGAAGSTMGA. Positions 573–591 are immunosuppression; that stretch reads KQLQARVLAVERYLKDQQL. C597 and C603 are oxidised to a cystine. N-linked (GlcNAc...) asparagine; by host glycans are attached at residues N610, N615, N624, and N636. Positions 632–666 form a coiled coil; that stretch reads REIDNYTHLIYTLIEESQNQQEKNEQELLELDKWA. An MPER; binding to GalCer region spans residues 661–682; the sequence is ELDKWAGLWSWFSITNWLWYIR. Residues 684–704 traverse the membrane as a helical segment; the sequence is FIIIVGGLVGLRIVFAVLSIV. At 705–855 the chain is on the cytoplasmic side; that stretch reads NRVRQGYSPL…IRQGLERALL (151 aa). The YXXL motif; contains endocytosis signal signature appears at 711–714; that stretch reads YSPL. Residues 718-742 form a disordered region; it reads TRLPTQRGPDRPEGIEEEGGERDRD. The S-palmitoyl cysteine; by host moiety is linked to residue C763. Residues 854–855 carry the Di-leucine internalization motif motif; that stretch reads LL.

Belongs to the HIV-1 env protein family. As to quaternary structure, the mature envelope protein (Env) consists of a homotrimer of non-covalently associated gp120-gp41 heterodimers. The resulting complex protrudes from the virus surface as a spike. There seems to be as few as 10 spikes on the average virion. Interacts with host CD4, CCR5 and CXCR4. Gp120 also interacts with the C-type lectins CD209/DC-SIGN and CLEC4M/DC-SIGNR (collectively referred to as DC-SIGN(R)). Gp120 and gp41 interact with GalCer. Gp120 interacts with host ITGA4/ITGB7 complex; on CD4+ T-cells, this interaction results in rapid activation of integrin ITGAL/LFA-1, which facilitates efficient cell-to-cell spreading of HIV-1. Gp120 interacts with cell-associated heparan sulfate; this interaction increases virus infectivity on permissive cells and may be involved in infection of CD4- cells. The mature envelope protein (Env) consists of a homotrimer of non-covalently associated gp120-gp41 heterodimers. The resulting complex protrudes from the virus surface as a spike. There seems to be as few as 10 spikes on the average virion. Post-translationally, highly glycosylated by host. The high number of glycan on the protein is reffered to as 'glycan shield' because it contributes to hide protein sequence from adaptive immune system. In terms of processing, palmitoylation of the transmembrane protein and of Env polyprotein (prior to its proteolytic cleavage) is essential for their association with host cell membrane lipid rafts. Palmitoylation is therefore required for envelope trafficking to classical lipid rafts, but not for viral replication. Specific enzymatic cleavages in vivo yield mature proteins. Envelope glycoproteins are synthesized as an inactive precursor that is heavily N-glycosylated and processed likely by host cell furin in the Golgi to yield the mature SU and TM proteins. The cleavage site between SU and TM requires the minimal sequence [KR]-X-[KR]-R. About 2 of the 9 disulfide bonds of gp41 are reduced by P4HB/PDI, following binding to CD4 receptor.

The protein resides in the virion membrane. It localises to the host cell membrane. The protein localises to the host endosome membrane. Oligomerizes in the host endoplasmic reticulum into predominantly trimers. In a second time, gp160 transits in the host Golgi, where glycosylation is completed. The precursor is then proteolytically cleaved in the trans-Golgi and thereby activated by cellular furin or furin-like proteases to produce gp120 and gp41. Functionally, attaches the virus to the host lymphoid cell by binding to the primary receptor CD4. This interaction induces a structural rearrangement creating a high affinity binding site for a chemokine coreceptor like CXCR4 and/or CCR5. Acts as a ligand for CD209/DC-SIGN and CLEC4M/DC-SIGNR, which are respectively found on dendritic cells (DCs), and on endothelial cells of liver sinusoids and lymph node sinuses. These interactions allow capture of viral particles at mucosal surfaces by these cells and subsequent transmission to permissive cells. HIV subverts the migration properties of dendritic cells to gain access to CD4+ T-cells in lymph nodes. Virus transmission to permissive T-cells occurs either in trans (without DCs infection, through viral capture and transmission), or in cis (following DCs productive infection, through the usual CD4-gp120 interaction), thereby inducing a robust infection. In trans infection, bound virions remain infectious over days and it is proposed that they are not degraded, but protected in non-lysosomal acidic organelles within the DCs close to the cell membrane thus contributing to the viral infectious potential during DCs' migration from the periphery to the lymphoid tissues. On arrival at lymphoid tissues, intact virions recycle back to DCs' cell surface allowing virus transmission to CD4+ T-cells. In terms of biological role, acts as a class I viral fusion protein. Under the current model, the protein has at least 3 conformational states: pre-fusion native state, pre-hairpin intermediate state, and post-fusion hairpin state. During fusion of viral and target intracellular membranes, the coiled coil regions (heptad repeats) assume a trimer-of-hairpins structure, positioning the fusion peptide in close proximity to the C-terminal region of the ectodomain. The formation of this structure appears to drive apposition and subsequent fusion of viral and target cell membranes. Complete fusion occurs in host cell endosomes and is dynamin-dependent, however some lipid transfer might occur at the plasma membrane. The virus undergoes clathrin-dependent internalization long before endosomal fusion, thus minimizing the surface exposure of conserved viral epitopes during fusion and reducing the efficacy of inhibitors targeting these epitopes. Membranes fusion leads to delivery of the nucleocapsid into the cytoplasm. The chain is Envelope glycoprotein gp160 from Homo sapiens (Human).